Consider the following 852-residue polypeptide: Serine/threonine-protein kinase pakB (852 aa).

The segment at 1–334 (MEQSKRVSMM…NVGNKQDEEK (334 aa)) is disordered. Position 8 is a phosphoserine; by autocatalysis (S8). Over residues 24-35 (SPPPNRKPPPPN) the composition is skewed to pro residues. Over residues 44–56 (SSLNSSGSSFVSP) the composition is skewed to low complexity. Residues 57–74 (SPSPSPSPQQPVKRPLPS) show a composition bias toward pro residues. 2 stretches are compositionally biased toward low complexity: residues 90-117 (RPQQ…NSNG) and 124-163 (FSSS…GSSN). Pro residues predominate over residues 181–191 (TPPPPPQPTPS). Residues 201-210 (ASHNNTQHNI) are compositionally biased toward polar residues. 2 stretches are compositionally biased toward low complexity: residues 246-270 (SPGS…STPI) and 293-317 (SNSN…ATTS). Residues 356–369 (VGSPFNVKHNIHVN) form the CRIB domain. The segment covering 419 to 433 (AQQEQQALMQKQMQQ) has biased composition (low complexity). The disordered stretch occupies residues 419–526 (AQQEQQALMQ…GILSQQQEQQ (108 aa)). Positions 470–485 (PQHHHQQQPPQQHHHQ) are enriched in basic residues. Low complexity predominate over residues 486-514 (QQQQQHNNNNNNNNNNNNNNNNQQSAQQQ). The Protein kinase domain maps to 570–823 (GEGSTKIGEG…AKVLLNHPFL (254 aa)). ATP is bound by residues 576-584 (IGEGAAGEV) and K599. The active-site Proton acceptor is the D691.

This sequence belongs to the protein kinase superfamily. STE Ser/Thr protein kinase family. STE20 subfamily. As to quaternary structure, interacts with rac1A, rac1B, rac1C, racA, racB, racC and racF1. Requires Mg(2+) as cofactor. Post-translationally, autophosphorylated at Ser-8. This may stimulate interaction with GTP-bound Rac family members which then further stimulates autophosphorylation and kinase activity.

It localises to the membrane. It is found in the cytoplasm. The protein resides in the cytoskeleton. It catalyses the reaction L-seryl-[protein] + ATP = O-phospho-L-seryl-[protein] + ADP + H(+). The catalysed reaction is L-threonyl-[protein] + ATP = O-phospho-L-threonyl-[protein] + ADP + H(+). Regulator of the myosin I component of the cytoskeleton: required for regulation of cytokinesis, phagocytosis and pinocytosis. The chain is Serine/threonine-protein kinase pakB from Dictyostelium discoideum (Social amoeba).